A 630-amino-acid polypeptide reads, in one-letter code: E3 ubiquitin-protein ligase TRIM41 (630 aa).

The segment at 20–61 (CAICLDYFTDPVSIGCGHNFCRVCVTQLWGGEDEEDRDELDR) adopts an RING-type; degenerate zinc-finger fold. The segment covering 51–75 (EDEEDRDELDREEEEEEVGEEEEVE) has biased composition (acidic residues). 2 disordered regions span residues 51 to 97 (EDEE…GDME) and 148 to 176 (EDED…PPPA). Position 85 is a phosphothreonine (threonine 85). The segment covering 148–166 (EDEDEEEEVLEEDEEEELD) has biased composition (acidic residues). Residues 222 to 263 (NEQGICPRHQEALKLFCEVDEEAICVVCRESRSHKQHSVVPL) form a B box-type zinc finger. Zn(2+)-binding residues include cysteine 227, histidine 230, cysteine 249, and histidine 255. A Glycyl lysine isopeptide (Lys-Gly) (interchain with G-Cter in SUMO2) cross-link involves residue lysine 256. Positions 281–374 (LRKHLEAVQK…AEAQERSQQG (94 aa)) form a coiled coil. The region spanning 413-630 (LTDAIVRKMS…SKGTRIKLCP (218 aa)) is the B30.2/SPRY domain. Serine 447 is modified (phosphoserine). Positions 503-535 (ARESTHHKEKVGSGGSSVSSGDASSSRHHHRRR) are disordered.

This sequence belongs to the TRIM/RBCC family. As to quaternary structure, interacts with PRKCA. Interacts with NOD2. Interacts with TRIM17; this interaction prevents TRIM41 activity on ZSCAN2. Post-translationally, auto-ubiquitinated.

It localises to the cytoplasm. The protein resides in the nucleus. It carries out the reaction S-ubiquitinyl-[E2 ubiquitin-conjugating enzyme]-L-cysteine + [acceptor protein]-L-lysine = [E2 ubiquitin-conjugating enzyme]-L-cysteine + N(6)-ubiquitinyl-[acceptor protein]-L-lysine.. It functions in the pathway protein modification; protein ubiquitination. Its function is as follows. E3 ligase that plays essential roles in innate antiviral response. Directly binds to influenza A virus or vesicular stomatitis virus nucleoproteins and targets them for ubiquitination and proteasomal degradation, thereby limiting viral infections. Activates the innate antiviral response by catalyzing monoubiquitination of CGAS, thereby activating CGAS. Also involved in innate antiviral response by mediating 'Lys-63'-linked polyubiquitylation of BCL10 which in turn hubs NEMO for activation of NF-kappa-B and IRF3 pathways. Catalyzes the ubiquitin-mediated degradation of other substrates including protein kinase C, ZSCAN21 or TOP3B suggesting additional roles besides its function in immune response. The chain is E3 ubiquitin-protein ligase TRIM41 from Mus musculus (Mouse).